A 367-amino-acid polypeptide reads, in one-letter code: Glutamate 5-kinase (367 aa).

An ATP-binding site is contributed by lysine 9. Residues serine 49, aspartate 136, and asparagine 148 each coordinate substrate. ATP contacts are provided by residues 168 to 169 and 210 to 216; these read TD and TGGMKSK. Positions 276-350 constitute a PUA domain; the sequence is SGQIEVDAGA…GMQSQDIQAR (75 aa).

The protein belongs to the glutamate 5-kinase family.

Its subcellular location is the cytoplasm. It catalyses the reaction L-glutamate + ATP = L-glutamyl 5-phosphate + ADP. It participates in amino-acid biosynthesis; L-proline biosynthesis; L-glutamate 5-semialdehyde from L-glutamate: step 1/2. Functionally, catalyzes the transfer of a phosphate group to glutamate to form L-glutamate 5-phosphate. In Bacillus mycoides (strain KBAB4) (Bacillus weihenstephanensis), this protein is Glutamate 5-kinase.